Consider the following 128-residue polypeptide: UPF0325 protein PMI2289 (128 aa).

This sequence belongs to the UPF0325 family.

In Proteus mirabilis (strain HI4320), this protein is UPF0325 protein PMI2289.